An 871-amino-acid polypeptide reads, in one-letter code: MSVDESNSDSEIDSISSSDEDEEPKLIYERITEKFQGCFMNDTISACAISKEHFFFGSHNGAIYIYQKNGILLRKMILHSASVVDLSVDLESENLASCSMDGKMIISNITTRETTVHDFKRPLLSVAIDPYYSTRSSRQVLSGGRAGKVVLSEKGWLGNKDTVLQADCGAVYKISWYTTYIAWASDLGITVYSTEFGKVLGRLEPPKRLPNDEIFPYQLFWQSESRLVIGWSDQIMIVSIQRSNVANELPKISLQALLEIDSIVSGVLMLGFNILTLAYIANVEDFTSAIPSQRIEGCRPELRLIDSSFKELCGDAIGLANYSRLQPSDYHLLPDPSSNSHSFVISPNDIVYVRERNQIDHVKYLVSKEMYAEAIDAVKKLPEIPPSLQISELAKKYIFHLLGKGQYKEAGMVIPSLYNDNLAEWEQWVFVFAENDHLEDIADFLPTGENHLSPLVYEMILAQYLATDERTFNKKLHEWPTMLYSVSTIRNATLKKFKENQKSSTLTESLAFLYLEDNMPIDAFHLYLKLHSELCIDLILQHNLYDEARASVLLLMLISSKGKSSDTKSAMSSMLVQHVHSFPPQEVIMQIHSVPQFLYEYFCEFELMYPNSLMEYGDLKLDVFAEFDRKRFFDFLVNTQCYSLDHAAQICKQYNYLDELVYILGRMGNNKEALMLIINELLDIGRAIRYVKEQADRELWDDLISYSLDKPEFICTLLENIGTDENARNLLSKIPPGTKLPHMKKSISKLLADHQSQVQLYQSCYKLFKNESISMAIKYREQEQSGLEFLVKDNPFNSFGDEQLDYNYRKRIPMIYDLRTKKYIRPEDVRIDTDDVFKDDKIAYFKTRMHLKPEVQMRNKLDLLMMLYKQT.

Residues 1–23 (MSVDESNSDSEIDSISSSDEDEE) are disordered. WD repeat units lie at residues 39-76 (FMNDTISACAISKEHFFFGSHNGAIYIYQKNGILLRKM), 78-117 (LHSASVVDLSVDLESENLASCSMDGKMIISNITTRETTVH), 119-162 (FKRP…NKDT), and 166-204 (ADCGAVYKISWYTTYIAWASDLGITVYSTEFGKVLGRLE). Residues 575–716 (LVQHVHSFPP…SLDKPEFICT (142 aa)) form a CHCR repeat.

This sequence belongs to the VPS41 family.

Required for vacuolar assembly and vacuolar traffic. The protein is Vacuolar protein sorting-associated protein 41 (vps41) of Schizosaccharomyces pombe (strain 972 / ATCC 24843) (Fission yeast).